The following is a 111-amino-acid chain: C-type lectin lectoxin-Enh2 (111 aa).

An N-terminal signal peptide occupies residues 1–23; it reads MGQFTVVSLGLLAMFLSLSGAKG. Cys-26 and Cys-37 are joined by a disulfide. Residues 33-108 form the C-type lectin domain; that stretch reads RNGVCNKLFP…CASLHPFICQ (76 aa). Positions 72–74 match the Mannose-binding motif; it reads EPN. The Ca(2+) site is built by Glu-80, Asn-95, and Asp-96. Cysteines 82 and 99 form a disulfide.

The protein belongs to the true venom lectin family. In terms of tissue distribution, expressed by the venom gland.

It is found in the secreted. Functionally, mannose-binding lectin which recognizes specific carbohydrate structures and agglutinates a variety of animal cells by binding to cell-surface glycoproteins and glycolipids. May be a calcium-dependent lectin. The sequence is that of C-type lectin lectoxin-Enh2 from Pseudoferania polylepis (Macleay's water snake).